Here is a 545-residue protein sequence, read N- to C-terminus: Spermatogenesis-associated serine-rich protein 2 (545 aa).

Positions 87-96 (KKNKKKKSKP) are enriched in basic residues. The interval 87 to 133 (KKNKKKKSKPKPASEASGSAPDSSKSAPIQEEQPASSEKGSINGYHV) is disordered. Positions 97–107 (KPASEASGSAP) are enriched in low complexity. A compositionally biased stretch (polar residues) spans 108–126 (DSSKSAPIQEEQPASSEKG). Phosphoserine occurs at positions 142, 145, and 147. Disordered stretches follow at residues 202-232 (RNAA…STNK) and 390-545 (VSLS…AANS). The segment covering 391–413 (SLSGPSDGSAASSSPDASVPSLP) has biased composition (low complexity). Residues 455 to 464 (RAQSQKTADP) are compositionally biased toward polar residues. Ser-520 is modified (phosphoserine).

Belongs to the SPATS2 family. Detected in testis, in spermatocytes and round spermatids (at protein level). Highly expressed in testis, and detected at lower levels in brain, heart, thymus, skeletal muscle, ovary, stomach and lung.

Its subcellular location is the cytoplasm. This is Spermatogenesis-associated serine-rich protein 2 (Spats2) from Mus musculus (Mouse).